The primary structure comprises 406 residues: Putative phosphate permease PH0640 (406 aa).

11 consecutive transmembrane segments (helical) span residues 2 to 22 (IPID…AWAI), 45 to 65 (AVLI…KTVT), 83 to 103 (VLIY…IIAT), 114 to 134 (SIIG…IVNW), 140 to 160 (VVLS…LVFR), 182 to 202 (FWIG…VLHG), 207 to 227 (IGIL…TSML), 265 to 285 (VANA…GLAG), 288 to 308 (VPVP…GVAT), 330 to 350 (FTID…GMPI), and 385 to 405 (FVTV…LLLI).

This sequence belongs to the inorganic phosphate transporter (PiT) (TC 2.A.20) family.

It localises to the cell membrane. Functionally, potential transporter for phosphate. The protein is Putative phosphate permease PH0640 of Pyrococcus horikoshii (strain ATCC 700860 / DSM 12428 / JCM 9974 / NBRC 100139 / OT-3).